The sequence spans 133 residues: Small ribosomal subunit protein eS24y (133 aa).

Residues 104 to 133 form a disordered region; it reads KSRKQIKERKNRAKKIRGVKKTKAGDTKKK. Residues 109–125 show a composition bias toward basic residues; the sequence is IKERKNRAKKIRGVKKT.

It belongs to the eukaryotic ribosomal protein eS24 family.

This is Small ribosomal subunit protein eS24y (RPS24B) from Arabidopsis thaliana (Mouse-ear cress).